Consider the following 298-residue polypeptide: GTP cyclohydrolase FolE2 (298 aa).

The protein belongs to the GTP cyclohydrolase IV family.

The catalysed reaction is GTP + H2O = 7,8-dihydroneopterin 3'-triphosphate + formate + H(+). The protein operates within cofactor biosynthesis; 7,8-dihydroneopterin triphosphate biosynthesis; 7,8-dihydroneopterin triphosphate from GTP: step 1/1. Converts GTP to 7,8-dihydroneopterin triphosphate. The sequence is that of GTP cyclohydrolase FolE2 from Neisseria meningitidis serogroup B (strain ATCC BAA-335 / MC58).